The chain runs to 1176 residues: Pesticidal crystal protein Cry1Ag (1176 aa).

It belongs to the delta endotoxin family.

Promotes colloidosmotic lysis by binding to the midgut epithelial cells of many lepidopteran larvae. The protein is Pesticidal crystal protein Cry1Ag (cry1Ag) of Bacillus thuringiensis.